Consider the following 129-residue polypeptide: Membrane protein 0 (129 aa).

The tract at residues 1–25 (MATVHYSRRPGTPPVTLTSSPSMDD) is disordered. The PPXY motif motif lies at 44–47 (PPPY). A helical membrane pass occupies residues 100 to 120 (FLILFGILTLTAVVVAIVAVF).

The protein belongs to the varicellovirus ORF0 protein family. Interacts with host ITCH; this interaction probably mediates ITCH degradation.

It is found in the host Golgi apparatus membrane. This Homo sapiens (Human) protein is Membrane protein 0.